An 834-amino-acid chain; its full sequence is DNA-directed RNA polymerase subunit beta' (834 aa).

Positions 88, 90, 104, and 107 each coordinate Zn(2+). Mg(2+)-binding residues include Asp641, Asp643, and Asp645.

The protein belongs to the RNA polymerase beta' chain family. RpoC1 subfamily. In plastids the minimal PEP RNA polymerase catalytic core is composed of four subunits: alpha, beta, beta', and beta''. When a (nuclear-encoded) sigma factor is associated with the core the holoenzyme is formed, which can initiate transcription. Mg(2+) serves as cofactor. The cofactor is Zn(2+).

The protein resides in the plastid. The catalysed reaction is RNA(n) + a ribonucleoside 5'-triphosphate = RNA(n+1) + diphosphate. In terms of biological role, DNA-dependent RNA polymerase catalyzes the transcription of DNA into RNA using the four ribonucleoside triphosphates as substrates. This Helicosporidium sp. subsp. Simulium jonesii (Green alga) protein is DNA-directed RNA polymerase subunit beta' (rpoC1).